A 341-amino-acid chain; its full sequence is S-adenosylmethionine:tRNA ribosyltransferase-isomerase (341 aa).

Belongs to the QueA family. Monomer.

Its subcellular location is the cytoplasm. The catalysed reaction is 7-aminomethyl-7-carbaguanosine(34) in tRNA + S-adenosyl-L-methionine = epoxyqueuosine(34) in tRNA + adenine + L-methionine + 2 H(+). It functions in the pathway tRNA modification; tRNA-queuosine biosynthesis. In terms of biological role, transfers and isomerizes the ribose moiety from AdoMet to the 7-aminomethyl group of 7-deazaguanine (preQ1-tRNA) to give epoxyqueuosine (oQ-tRNA). The polypeptide is S-adenosylmethionine:tRNA ribosyltransferase-isomerase (Staphylococcus epidermidis (strain ATCC 35984 / DSM 28319 / BCRC 17069 / CCUG 31568 / BM 3577 / RP62A)).